The chain runs to 106 residues: Immunoglobulin lambda constant 1 (106 aa).

The Ig-like domain maps to 7 to 101 (PTVTLFPPSS…EGSTVEKTVA (95 aa)). C28 and C87 form a disulfide bridge.

In terms of assembly, immunoglobulins are composed of two identical heavy chains and two identical light chains; disulfide-linked.

The protein resides in the secreted. Its subcellular location is the cell membrane. Constant region of immunoglobulin light chains. Immunoglobulins, also known as antibodies, are membrane-bound or secreted glycoproteins produced by B lymphocytes. In the recognition phase of humoral immunity, the membrane-bound immunoglobulins serve as receptors which, upon binding of a specific antigen, trigger the clonal expansion and differentiation of B lymphocytes into immunoglobulins-secreting plasma cells. Secreted immunoglobulins mediate the effector phase of humoral immunity, which results in the elimination of bound antigens. The antigen binding site is formed by the variable domain of one heavy chain, together with that of its associated light chain. Thus, each immunoglobulin has two antigen binding sites with remarkable affinity for a particular antigen. The variable domains are assembled by a process called V-(D)-J rearrangement and can then be subjected to somatic hypermutations which, after exposure to antigen and selection, allow affinity maturation for a particular antigen. The polypeptide is Immunoglobulin lambda constant 1 (Homo sapiens (Human)).